A 115-amino-acid chain; its full sequence is Salivary protein gSG6 (115 aa).

The signal sequence occupies residues 1–28 (MAIRVELLLAMVLLPLLLLESVVPHAAA).

As to expression, female saliva (at protein level). Distal-lateral lobes of female salivary gland (at protein level). Not detected in male salivary gland (at protein level).

It localises to the secreted. Its function is as follows. Required for efficient probing and blood feeding. This is Salivary protein gSG6 from Anopheles gambiae (African malaria mosquito).